The primary structure comprises 118 residues: MGFSDNLNHMEKRKSGYVTQKQFSEFKDANNQRLIKIETTLATQGEQLNQLIKVVILQGEQIKELQVEQKAQGEQIKAKGEQIKAQSEQIKTQGETLKLILQALGGINKRLDKVDPPK.

Belongs to the UPF0134 family.

The protein is UPF0134 protein MPN_287 of Mycoplasma pneumoniae (strain ATCC 29342 / M129 / Subtype 1) (Mycoplasmoides pneumoniae).